A 92-amino-acid chain; its full sequence is DNA-directed RNA polymerase subunit Rpo11 (92 aa).

This sequence belongs to the archaeal Rpo11/eukaryotic RPB11/RPC19 RNA polymerase subunit family. As to quaternary structure, part of the RNA polymerase complex.

It localises to the cytoplasm. The enzyme catalyses RNA(n) + a ribonucleoside 5'-triphosphate = RNA(n+1) + diphosphate. In terms of biological role, DNA-dependent RNA polymerase (RNAP) catalyzes the transcription of DNA into RNA using the four ribonucleoside triphosphates as substrates. The polypeptide is DNA-directed RNA polymerase subunit Rpo11 (Halorubrum lacusprofundi (strain ATCC 49239 / DSM 5036 / JCM 8891 / ACAM 34)).